Consider the following 301-residue polypeptide: RNA polymerase II holoenzyme cyclin-like subunit (301 aa).

The region spanning 53–142 (QQLIKLGKRT…LGECEFALIS (90 aa)) is the Cyclin N-terminal domain.

Belongs to the cyclin family. Cyclin C subfamily. Component of the srb8-11 complex, a regulatory module of the Mediator complex.

Its subcellular location is the nucleus. In terms of biological role, component of the srb8-11 complex. The srb8-11 complex is a regulatory module of the Mediator complex which is itself involved in regulation of basal and activated RNA polymerase II-dependent transcription. The srb8-11 complex may be involved in the transcriptional repression of a subset of genes regulated by Mediator. It may inhibit the association of the Mediator complex with RNA polymerase II to form the holoenzyme complex. The srb8-11 complex phosphorylates the C-terminal domain (CTD) of the largest subunit of RNA polymerase II. The chain is RNA polymerase II holoenzyme cyclin-like subunit (ssn8) from Aspergillus terreus (strain NIH 2624 / FGSC A1156).